Reading from the N-terminus, the 660-residue chain is Glycine betaine transporter (660 aa).

Residues 1–13 (MPSKTSSRFANIN) lie on the Cytoplasmic side of the membrane. A helical membrane pass occupies residues 14–34 (PNVFVSTIMIIAIFLAIVILA). Residues 35 to 52 (PDAFELLTQQLKNWITES) are Periplasmic-facing. A helical transmembrane segment spans residues 53–73 (FSWFYVLSVAFFLIVLGYIAC). The Cytoplasmic portion of the chain corresponds to 74 to 93 (SSSGKIKLGPDHSQPDYSNS). Residues 94-114 (SWFAMLFTAGMGIGLMFFGIA) traverse the membrane as a helical segment. Residues 115–139 (EPIMHYVSPPSGEPETILAAQQSMR) are Periplasmic-facing. The helical transmembrane segment at 140–160 (VTFFHWGLHAWGIYAIVALSL) threads the bilayer. The Cytoplasmic segment spans residues 161–195 (SYFAYRHDLPLKIRSSLYPLIGKKIYGPMGDAVDT). Residues 196–216 (FATIGTIFGVATTLGFGVTQI) traverse the membrane as a helical segment. The Periplasmic segment spans residues 217–230 (SSGLNYLFGFEPTS). The helical transmembrane segment at 231–251 (FSKVVLIIIVSAMAALSVGLG) threads the bilayer. Residues 252-263 (LDKGVKRLAELN) lie on the Cytoplasmic side of the membrane. Residues 264–284 (LVLAVTLLAFVFFTSATVYLL) traverse the membrane as a helical segment. Over 285 to 316 (QTTIQNTGQYISNLFEMTFNLYAYQPNGWIGG) the chain is Periplasmic. Residues 317–337 (WTIMYWAWWISWSPFVGMFIA) traverse the membrane as a helical segment. Residues 338-347 (RVSRGRTIRE) lie on the Cytoplasmic side of the membrane. The helical transmembrane segment at 348-368 (FIIGVMLIPTGFTLIWMGFMG) threads the bilayer. The Periplasmic segment spans residues 369 to 401 (NAGLYSILHDGNLSLLNAVQRDSSVALFEFLHS). A helical membrane pass occupies residues 402–422 (LPFSGVMSLLATVLVVLFFVT). At 423-446 (SADSGALVVDYLTAKSEDSPVWQR) the chain is on the cytoplasmic side. The chain crosses the membrane as a helical span at residues 447 to 467 (LFWIVVMAGLAIILLLAGGLT). Residues 468–471 (ALQS) lie on the Periplasmic side of the membrane. A helical membrane pass occupies residues 472–492 (ATIMSALPFTFIMLLICWGLI). Residues 493–660 (KALRIDSTKM…LSVMRAQTGN (168 aa)) are Cytoplasmic-facing.

Belongs to the BCCT transporter (TC 2.A.15) family.

The protein localises to the cell inner membrane. Uptake is activated by NaCl, KCl or mannose gradients across the cell membrane. Inhibited by the protonophore 3,3',4',5-tetrachlorosalicylanilide (TCS). Functionally, energy-dependent uptake of glycine betaine in response to high salinity. The protein is Glycine betaine transporter of Acinetobacter baylyi (strain ATCC 33305 / BD413 / ADP1).